We begin with the raw amino-acid sequence, 220 residues long: Deoxyribose-phosphate aldolase (220 aa).

Catalysis depends on Asp89, which acts as the Proton donor/acceptor. Lys151 (schiff-base intermediate with acetaldehyde) is an active-site residue. The active-site Proton donor/acceptor is Lys180.

The protein belongs to the DeoC/FbaB aldolase family. DeoC type 1 subfamily.

The protein localises to the cytoplasm. The enzyme catalyses 2-deoxy-D-ribose 5-phosphate = D-glyceraldehyde 3-phosphate + acetaldehyde. It functions in the pathway carbohydrate degradation; 2-deoxy-D-ribose 1-phosphate degradation; D-glyceraldehyde 3-phosphate and acetaldehyde from 2-deoxy-alpha-D-ribose 1-phosphate: step 2/2. In terms of biological role, catalyzes a reversible aldol reaction between acetaldehyde and D-glyceraldehyde 3-phosphate to generate 2-deoxy-D-ribose 5-phosphate. This is Deoxyribose-phosphate aldolase from Streptococcus pneumoniae serotype 2 (strain D39 / NCTC 7466).